A 372-amino-acid chain; its full sequence is Ligninase B (372 aa).

Positions methionine 1–alanine 21 are cleaved as a signal peptide. The propeptide occupies alanine 22–arginine 28. 4 disulfides stabilise this stretch: cysteine 31/cysteine 43, cysteine 42/cysteine 313, cysteine 62/cysteine 148, and cysteine 277/cysteine 345. The active-site Proton acceptor is the histidine 75. Positions 76, 94, 96, and 98 each coordinate Ca(2+). A heme b-binding site is contributed by histidine 204. Residues serine 205, aspartate 222, threonine 224, isoleucine 227, and aspartate 229 each coordinate Ca(2+). Asparagine 285 carries N-linked (GlcNAc...) asparagine glycosylation. Low complexity predominate over residues phenylalanine 350–threonine 361. The disordered stretch occupies residues phenylalanine 350–alanine 372.

The protein belongs to the peroxidase family. Ligninase subfamily. It depends on heme b as a cofactor. Requires Ca(2+) as cofactor.

It carries out the reaction 1-(3,4-dimethoxyphenyl)-2-(2-methoxyphenoxy)propane-1,3-diol + H2O2 = 3,4-dimethoxybenzaldehyde + guaiacol + glycolaldehyde + H2O. The catalysed reaction is 2 (3,4-dimethoxyphenyl)methanol + H2O2 = 2 (3,4-dimethoxyphenyl)methanol radical + 2 H2O. It functions in the pathway secondary metabolite metabolism; lignin degradation. Functionally, depolymerization of lignin. Catalyzes the C(alpha)-C(beta) cleavage of the propyl side chains of lignin. The protein is Ligninase B (LIPB) of Phanerodontia chrysosporium (White-rot fungus).